A 609-amino-acid chain; its full sequence is Sterol O-acyltransferase 2 (609 aa).

Residues 1–15 (MGRTNTSDQLNAISD) are compositionally biased toward polar residues. Residues 1–41 (MGRTNTSDQLNAISDKNTKRKSLALDNEYHNNSSSEDDSSK) form a disordered region. The next 6 helical transmembrane spans lie at 152-172 (FFGM…NNLI), 195-215 (LFKV…AFFV), 229-249 (VGWW…LWIA), 253-273 (CLDF…VFIM), 402-422 (WSYV…MILI), and 451-471 (FLLM…FFLI). The short motif at 490 to 496 (FYGPWWS) is the FYXDWWN motif element. The next 2 helical transmembrane spans lie at 534–554 (AAII…YVIF) and 589–609 (IICW…YLVF). H546 is an active-site residue.

This sequence belongs to the membrane-bound acyltransferase family. Sterol o-acyltransferase subfamily.

The protein localises to the endoplasmic reticulum membrane. Inhibited by the protoberberine derivative HWY-289 in a non-competitive manner. Inhibited by miconazole. Not inhibited by CI-976, polyoxin D, amphotericin B or nikkomycin Z. Sterol O-acyltransferase that catalyzes the formation of stery esters. The sequence is that of Sterol O-acyltransferase 2 from Candida albicans (Yeast).